Here is a 247-residue protein sequence, read N- to C-terminus: 5-oxoprolinase subunit A (247 aa).

Belongs to the LamB/PxpA family. As to quaternary structure, forms a complex composed of PxpA, PxpB and PxpC.

It catalyses the reaction 5-oxo-L-proline + ATP + 2 H2O = L-glutamate + ADP + phosphate + H(+). Catalyzes the cleavage of 5-oxoproline to form L-glutamate coupled to the hydrolysis of ATP to ADP and inorganic phosphate. This is 5-oxoprolinase subunit A from Ralstonia pickettii (strain 12J).